A 428-amino-acid polypeptide reads, in one-letter code: MQHTIKNVSETEQQLEIILSAEEFNPEVELEIQDAKKNIQIKGFRKGHVPVGLIKKLMGPAIEASVAEKLASKYFGEIAEKETIKPASRAQLDNFSFNDDQLTITLSYEIHPEFELKDFSGYSFVEDLYTVSDEDVQNEINLILKGHGTLVSVDEAATSNDTVIADLIKLDAEGKEIEEQKTENHHFNLEYLPEDNPFKKALTGAKAEETVNVDIEPKEEGEEKVSYEISVKEVKRMELPELTDELLKEITQEKFDSIDAFTQDVRQQLEEHFSGKSEQDLLESISSKLIEENPVATPSAMVDSFENMLIENAKRQFGGNFPAGFDDTELRASMRPNAVKHAQWMLISQKIAETNNLEVTDEDIKAYAEKEAEKNPSVKAEELINTYMSTEFKDYMIDTILKDKIYGIIKSSVTIQGENKAIPKHNHR.

The PPIase FKBP-type domain occupies Ala-165–Pro-240.

It belongs to the FKBP-type PPIase family. Tig subfamily.

The protein localises to the cytoplasm. The catalysed reaction is [protein]-peptidylproline (omega=180) = [protein]-peptidylproline (omega=0). In terms of biological role, involved in protein export. Acts as a chaperone by maintaining the newly synthesized protein in an open conformation. Functions as a peptidyl-prolyl cis-trans isomerase. The protein is Trigger factor of Prosthecochloris aestuarii (strain DSM 271 / SK 413).